A 489-amino-acid chain; its full sequence is Long chain base biosynthesis protein 2a (489 aa).

A helical transmembrane segment spans residues 2–22 (ITIPYLTAVSTYFSYGLLFAF). Lysine 311 is subject to N6-(pyridoxal phosphate)lysine.

This sequence belongs to the class-II pyridoxal-phosphate-dependent aminotransferase family. Heterodimer with LCB1. Component of the serine palmitoyltransferase (SPT) complex, composed of LCB1 and LCB2 (LCB2a or LCB2b). Pyridoxal 5'-phosphate serves as cofactor. As to expression, ubiquitous. Detected in leaves, roots, stems, flowers and at a lower level in mature seeds.

It localises to the endoplasmic reticulum membrane. The enzyme catalyses L-serine + hexadecanoyl-CoA + H(+) = 3-oxosphinganine + CO2 + CoA. It participates in lipid metabolism; sphingolipid metabolism. Serine palmitoyltransferase (SPT). The heterodimer formed with LCB1 constitutes the catalytic core. Involved in the regulation of the programmed cell death (PCD) signaling pathway. Plays an important role during male gametogenesis and embryogenesis. This Arabidopsis thaliana (Mouse-ear cress) protein is Long chain base biosynthesis protein 2a (LCB2a).